Here is a 172-residue protein sequence, read N- to C-terminus: Myosin regulatory light polypeptide 9 (172 aa).

Basic residues predominate over residues 1–16 (MSSKRAKAKTTKKRPQ). The tract at residues 1-20 (MSSKRAKAKTTKKRPQRATS) is disordered. Residue S2 is modified to N-acetylserine. T19 is subject to Phosphothreonine; by MLCK, CIT and ROCK2. Residue S20 is modified to Phosphoserine; by CDC42BP, CIT, MLCK, PAK1, ROCK1, ROCK2, DAPK1, DAPK2 and ZIPK/DAPK3. EF-hand domains follow at residues 29 to 64 (SQIQ…LGKN), 98 to 133 (DPED…MGDR), and 134 to 169 (FTDE…GAKD). Ca(2+) is bound by residues D42, N44, D46, and D53.

In terms of assembly, myosin is a hexamer of 2 heavy chains and 4 light chains: interacts with myosin heavy chain MYO19. Interacts with LUZP1; the interaction results in inhibition of phosphorylation of MYL9 by DAPK3. Post-translationally, phosphorylation increases the actin-activated myosin ATPase activity and thereby regulates the contractile activity. It is required to generate the driving force in the migration of the cells but not necessary for localization of myosin-2 at the leading edge. Phosphorylation is required for myotube formation. Phosphorylated by DAPK3; DAPK3-mediated phosphorylation is inhibited by LUZP1. In terms of tissue distribution, smooth muscle tissues and in some, but not all, nonmuscle cells.

The protein localises to the cytoplasm. It localises to the cytoskeleton. The protein resides in the cell cortex. Functionally, myosin regulatory subunit that plays an important role in regulation of both smooth muscle and nonmuscle cell contractile activity via its phosphorylation. Implicated in cytokinesis, receptor capping, and cell locomotion. In myoblasts, may regulate PIEZO1-dependent cortical actomyosin assembly involved in myotube formation. The chain is Myosin regulatory light polypeptide 9 (MYL9) from Homo sapiens (Human).